The primary structure comprises 169 residues: Ion-translocating oxidoreductase complex subunit B (169 aa).

A hydrophobic region spans residues 1–23; it reads MIISIIIFSILSFILGVIVSLVS. In terms of domain architecture, 4Fe-4S spans 30-89; sequence SNLSLINDIDELLPQMQCAQCGYPGCYAYSQAIVDGNENIYKCIPGGKEVVLKLENLLNK. Residues cysteine 47, cysteine 50, cysteine 55, cysteine 72, cysteine 116, cysteine 119, cysteine 122, cysteine 126, cysteine 146, cysteine 149, cysteine 152, and cysteine 156 each coordinate [4Fe-4S] cluster. 4Fe-4S ferredoxin-type domains are found at residues 107–136 and 137–166; these read SIVE…GTYN and FRHT…KKIM.

This sequence belongs to the 4Fe4S bacterial-type ferredoxin family. RnfB subfamily. In terms of assembly, the complex is composed of six subunits: RnfA, RnfB, RnfC, RnfD, RnfE and RnfG. The cofactor is [4Fe-4S] cluster.

Its subcellular location is the cell inner membrane. Functionally, part of a membrane-bound complex that couples electron transfer with translocation of ions across the membrane. The sequence is that of Ion-translocating oxidoreductase complex subunit B from Buchnera aphidicola subsp. Baizongia pistaciae (strain Bp).